The primary structure comprises 118 residues: Acidic elicitin A1 (118 aa).

A signal peptide spans 1-20 (MNFRALFAATVAALVGSTSA). 3 disulfides stabilise this stretch: Cys-23–Cys-91, Cys-47–Cys-76, and Cys-71–Cys-115.

It belongs to the elicitin family.

It is found in the secreted. Functionally, induces local and distal defense responses (incompatible hypersensitive reaction) in plants from the solanaceae and cruciferae families. Elicits leaf necrosis and causes the accumulation of pathogenesis-related proteins. Might interact with the lipidic molecules of the plasma membrane. The polypeptide is Acidic elicitin A1 (B14) (Phytophthora cryptogea).